The chain runs to 550 residues: Natural resistance-associated macrophage protein 1 (550 aa).

The tract at residues 1 to 45 (MTGDKGPQRLSGSSYGSISSPTSPTSPGPQQAPPRETYLSEKIPI) is disordered. Residues 1–58 (MTGDKGPQRLSGSSYGSISSPTSPTSPGPQQAPPRETYLSEKIPIPDTKPGTFSLRKL) are Cytoplasmic-facing. The span at 11–23 (SGSSYGSISSPTS) shows a compositional bias: low complexity. The chain crosses the membrane as a helical span at residues 59 to 76 (WAFTGPGFLMSIAFLDPG). The Extracellular portion of the chain corresponds to 77–85 (NIESDLQAG). A helical transmembrane segment spans residues 86–105 (AVAGFKLLWVLLWATVLGLL). Residues 106 to 142 (CQRLAARLGVVTGKDLGEVCHLYYPKVPRTVLWLTIE) are Cytoplasmic-facing. The helical transmembrane segment at 143-163 (LAIVGSDMQEVIGTAIAFNLL) threads the bilayer. At 164-167 (SAGR) the chain is on the extracellular side. Residues 168 to 187 (IPLWGGVLITIVDTFFFLFL) form a helical membrane-spanning segment. The Cytoplasmic segment spans residues 188-196 (DNYGLRKLE). A helical membrane pass occupies residues 197–217 (AFFGLLITIMALTFGYEYVVA). Over 218 to 240 (RPEQGALLRGLFLPSCPGCGHPE) the chain is Extracellular. Residues 241 to 259 (LLQAVGIVGAIIMPHNIYL) form a helical membrane-spanning segment. Over 260–287 (HSALVKSREIDRARRADIREANMYFLIE) the chain is Cytoplasmic. The chain crosses the membrane as a helical span at residues 288-307 (ATIALSVSFIINLFVMAVFG). Over 308–349 (QAFYQKTNQAAFNICANSSLHDYAKIFPMNNATVAVDIYQGG) the chain is Extracellular. 2 N-linked (GlcNAc...) asparagine glycosylation sites follow: Asn324 and Asn338. Residues 350-369 (VILGCLFGPAALYIWAIGLL) form a helical membrane-spanning segment. The Cytoplasmic segment spans residues 370-400 (AAGQSSTMTGTYAGQFVMEGFLRLRWSRFAR). The chain crosses the membrane as a helical span at residues 401–418 (VLLTRSCAILPTVLVAVF). At 419 to 429 (RDLRDLSGLND) the chain is on the extracellular side. A helical membrane pass occupies residues 430–450 (LLNVLQSLLLPFAVLPILTFT). At 451–466 (SMPTLMQEFANGLLNK) the chain is on the cytoplasmic side. Residues 467–488 (VVTSSIMVLVCAINLYFVVSYL) traverse the membrane as a helical segment. Residues 489–496 (PSLPHPAY) are Extracellular-facing. The chain crosses the membrane as a helical span at residues 497–516 (FGLAALLAAAYLGLSTYLVW). The Cytoplasmic segment spans residues 517-550 (TCCLAHGATFLAHSSHHHFLYGLLEEDQKGETSG).

Belongs to the NRAMP family. Macrophages; peripheral blood leukocytes, lung, spleen and liver.

The protein localises to the late endosome membrane. It is found in the lysosome membrane. The catalysed reaction is Zn(2+)(in) + H(+)(out) = Zn(2+)(out) + H(+)(in). It catalyses the reaction Fe(2+)(in) + H(+)(out) = Fe(2+)(out) + H(+)(in). It carries out the reaction Mn(2+)(in) + H(+)(out) = Mn(2+)(out) + H(+)(in). Macrophage-specific antiporter that fluxes metal ions in either direction against a proton gradient. Localized to late endosomal lysosomal membranes, delivers bivalent cations from the cytosol into these acidic compartments where they may directly affect antimicrobial activity. Involved in iron metabolism and host natural resistance to infection with intracellular parasites. Pathogen resistance involves sequestration of Fe(2+) and Mn(2+), cofactors of both prokaryotic and eukaryotic catalases and superoxide dismutases, not only to protect the macrophage against its own generation of reactive oxygen species, but to deny the cations to the pathogen for synthesis of its protective enzymes. In Homo sapiens (Human), this protein is Natural resistance-associated macrophage protein 1.